Consider the following 348-residue polypeptide: Zinc transporter ZIP13 (348 aa).

At 1–45 the chain is on the cytoplasmic side; that stretch reads MMIQTAVAQAKTAPAGPGPWSIKDLVDLQYLDELMSIDNLDVWFC. The helical transmembrane segment at 46–66 threads the bilayer; the sequence is SLVGSIAIGLSGIFPLLVIPI. The Lumenal portion of the chain corresponds to 67–83; sequence EAGTALKTEAGCQKLKK. A helical transmembrane segment spans residues 84-104; that stretch reads LLSFAIGGLLGDVFLHLLPEA. Residues 105-118 lie on the Cytoplasmic side of the membrane; that stretch reads WAYTSSPGGSHRHY. A helical membrane pass occupies residues 119-139; sequence CTQGLWVIGGLMSFLTLEKMF. The Lumenal portion of the chain corresponds to 140 to 219; sequence PDEVGDPETK…CIDNFTHGLA (80 aa). The segment at 144–192 is disordered; it reads GDPETKTSFQRTTSSSSDLSSQFSVSPQTNGICSNNNSDSKPKTDISPY. Residues 149-169 are compositionally biased toward low complexity; that stretch reads KTSFQRTTSSSSDLSSQFSVS. Residues 170-182 are compositionally biased toward polar residues; that stretch reads PQTNGICSNNNSD. A helical membrane pass occupies residues 220–240; that stretch reads VAGSFLVSRKVGFLTTFAILL. An XEXPHE-motif motif is present at residues 241–246; the sequence is HEIPHE. At 241-262 the chain is on the cytoplasmic side; that stretch reads HEIPHEVGDFAILLRAGFDRWK. A helical membrane pass occupies residues 263–283; the sequence is AARMQLSTALGGVLGACFALC. The Lumenal portion of the chain corresponds to 284–294; that stretch reads SQSQHGAENAT. A helical membrane pass occupies residues 295-315; the sequence is TWILPFTSGGFLYIALVNVVP. The Cytoplasmic portion of the chain corresponds to 316–326; that stretch reads DLLEETNPRNS. Residues 327-347 form a helical membrane-spanning segment; it reads LLQVLLLFSGIGVMALLSIAM. Residue D348 is a topological domain, lumenal.

The protein belongs to the ZIP transporter (TC 2.A.5) family. In terms of assembly, homodimer.

The protein resides in the golgi apparatus membrane. Its subcellular location is the cytoplasmic vesicle membrane. The protein localises to the endoplasmic reticulum membrane. It carries out the reaction Zn(2+)(in) = Zn(2+)(out). Its function is as follows. Functions as a zinc transporter transporting Zn(2+) from the Golgi apparatus to the cytosol and thus influences the zinc level at least in areas of the cytosol. In Danio rerio (Zebrafish), this protein is Zinc transporter ZIP13.